We begin with the raw amino-acid sequence, 1058 residues long: MPKRTDIHKIMVIGSGPIIIGQAAEFDYSGTQACLALKELDYEVVLVNSNPATIMTDKEIADQVYLEPITLEFVSQILRKEHPDAILPTLGGQQGLNMAMELSKSGILDELHIELLGTKLSAIDQAEDREQFKALMEELGEPVPASGIARTVDEALAFAKQAGYPVIVRPAFTMGGTGGGIAETPQQLHDITENGLALSPVTQVLIEQSIAGYKEIEFEVMRDAADNAMVVCNMENFDPVGIHTGDSIVYAPVQTLADREVQLLRDAALKIIRALKIEGGCNVQLALDPNSFNYYIIEVNPRVSRSSALASKATGYPIAKMAAKIAVGLHLDEIKNPVTGTTYAEFEPALDYVVCKIPRWPFDKFTHADRRLGTQMKATGEVMAIGRNIEEATLKAVRSLEIGVHHVEEPALRSVDDDVLSDKLIHAQDDRLFYLTEAIRRGYPIDELAELTKINVFFLDKLLHIIEIEQALRTHTDDIETLTVAKRNGFADQTVADYWHETIDQVRDFRLAHKLAPVYKMVDTCAGEFASETPYYYGTYEFENESIVTKRPSVLVLGSGPIRIGQGVEFDYATVHSVKAIQKAGYEAIIMNSNPETVSTDFSVSDKLYFEPLTIEDVLNVIELEKPVGVIVQFGGQTAINLAKPLADHGIKILGTSVADVNRAEDRDEFDKVIKALAIPQPAGDTASDEATALAIADKLGYPVLVRPSYVLGGRAMEIVKKRTDLDYYMHNAVKVSHDHPVLVDSYLVGKECEVDAICDGQTVLIPGIMEHIERAGVHSGDSMAVYPPQSLSAAVQAQIVDYTEKLAIALNCVGMMNIQFVIHDDQVYVIEVNPRASRTVPFLSKVTNIPMAQVATRAILDQSLAEQGYQTGLVTPGPLVHVKAPVFSFSKLNRVDSLLGPEMKSTGEVMGSDVTMAKALYKAFEAAKLHVPSHGNVLLTVRDEDKPETVALAKRFHALGYQLLATRGTATALTTHGLPVTTVDKIDSGERDLLHRMEAGEIQVVINTVSDEEQAENDGTLIRNTSIMHGIPLFTALDTVAAILQVRESQSFVTQAL.

The interval 1–401 (MPKRTDIHKI…ATLKAVRSLE (401 aa)) is carboxyphosphate synthetic domain. 12 residues coordinate ATP: Arg-129, Arg-169, Gly-175, Gly-176, Gln-208, Ile-210, Glu-215, Gly-241, Ile-242, His-243, Gln-284, and Glu-298. An ATP-grasp 1 domain is found at 133–327 (KALMEELGEP…IAKMAAKIAV (195 aa)). Mg(2+) contacts are provided by Gln-284, Glu-298, and Asn-300. Mn(2+) contacts are provided by Gln-284, Glu-298, and Asn-300. An oligomerization domain region spans residues 402 to 546 (IGVHHVEEPA…YGTYEFENES (145 aa)). Positions 547-929 (IVTKRPSVLV…ALYKAFEAAK (383 aa)) are carbamoyl phosphate synthetic domain. One can recognise an ATP-grasp 2 domain in the interval 671-861 (DKVIKALAIP…MAQVATRAIL (191 aa)). Residues Arg-707, Ser-746, Leu-748, Glu-752, Gly-777, Val-778, His-779, Ser-780, Gln-820, and Glu-832 each contribute to the ATP site. Residues Gln-820, Glu-832, and Asn-834 each coordinate Mg(2+). Residues Gln-820, Glu-832, and Asn-834 each coordinate Mn(2+). The MGS-like domain maps to 930 to 1058 (LHVPSHGNVL…ESQSFVTQAL (129 aa)). The allosteric domain stretch occupies residues 930–1058 (LHVPSHGNVL…ESQSFVTQAL (129 aa)).

It belongs to the CarB family. In terms of assembly, composed of two chains; the small (or glutamine) chain promotes the hydrolysis of glutamine to ammonia, which is used by the large (or ammonia) chain to synthesize carbamoyl phosphate. Tetramer of heterodimers (alpha,beta)4. Mg(2+) serves as cofactor. Mn(2+) is required as a cofactor.

The catalysed reaction is hydrogencarbonate + L-glutamine + 2 ATP + H2O = carbamoyl phosphate + L-glutamate + 2 ADP + phosphate + 2 H(+). The enzyme catalyses hydrogencarbonate + NH4(+) + 2 ATP = carbamoyl phosphate + 2 ADP + phosphate + 2 H(+). Its pathway is amino-acid biosynthesis; L-arginine biosynthesis; carbamoyl phosphate from bicarbonate: step 1/1. It participates in pyrimidine metabolism; UMP biosynthesis via de novo pathway; (S)-dihydroorotate from bicarbonate: step 1/3. In terms of biological role, small subunit of the glutamine-dependent carbamoyl phosphate synthetase (CPSase). CPSase catalyzes the formation of carbamoyl phosphate from the ammonia moiety of glutamine, carbonate, and phosphate donated by ATP, constituting the first step of the biosynthetic pathway leading to pyrimidine nucleotides. The large subunit (synthetase) binds the substrates ammonia (free or transferred from glutamine from the small subunit), hydrogencarbonate and ATP and carries out an ATP-coupled ligase reaction, activating hydrogencarbonate by forming carboxy phosphate which reacts with ammonia to form carbamoyl phosphate. This is Carbamoyl phosphate synthase pyrimidine-specific large chain (pyrAB) from Lactiplantibacillus plantarum (strain ATCC BAA-793 / NCIMB 8826 / WCFS1) (Lactobacillus plantarum).